A 159-amino-acid chain; its full sequence is Alpha-lactalbumin (159 aa).

An N-terminal signal peptide occupies residues 1–19; sequence MMRFVPLFLACISLPAFQA. Residues 20-142 enclose the C-type lysozyme domain; the sequence is TEFTKCEVSH…KLEQWRCEKP (123 aa). Disulfide bonds link Cys25/Cys139, Cys47/Cys130, Cys80/Cys96, and Cys92/Cys110. N-linked (GlcNAc...) asparagine glycosylation is present at Asn64. Positions 98, 101, 106, and 107 each coordinate Ca(2+).

It belongs to the glycosyl hydrolase 22 family. Lactose synthase (LS) is a heterodimer of a catalytic component, beta1,4-galactosyltransferase (beta4Gal-T1) and a regulatory component, alpha-lactalbumin (LA). As to expression, mammary gland specific. Secreted in milk.

Its subcellular location is the secreted. In terms of biological role, regulatory subunit of lactose synthase, changes the substrate specificity of galactosyltransferase in the mammary gland making glucose a good acceptor substrate for this enzyme. This enables LS to synthesize lactose, the major carbohydrate component of milk. In other tissues, galactosyltransferase transfers galactose onto the N-acetylglucosamine of the oligosaccharide chains in glycoproteins. The chain is Alpha-lactalbumin (Lalba) from Rattus norvegicus (Rat).